Consider the following 440-residue polypeptide: Xaa-Pro dipeptidase (440 aa).

The Mn(2+) site is built by Asp244, Asp255, His335, Glu380, and Glu419.

The protein belongs to the peptidase M24B family. Bacterial-type prolidase subfamily. Mn(2+) serves as cofactor.

The catalysed reaction is Xaa-L-Pro dipeptide + H2O = an L-alpha-amino acid + L-proline. Splits dipeptides with a prolyl residue in the C-terminal position. In Shewanella pealeana (strain ATCC 700345 / ANG-SQ1), this protein is Xaa-Pro dipeptidase.